Here is a 170-residue protein sequence, read N- to C-terminus: Large ribosomal subunit protein uL10 (170 aa).

The protein belongs to the universal ribosomal protein uL10 family. In terms of assembly, part of the ribosomal stalk of the 50S ribosomal subunit. The N-terminus interacts with L11 and the large rRNA to form the base of the stalk. The C-terminus forms an elongated spine to which L12 dimers bind in a sequential fashion forming a multimeric L10(L12)X complex.

Its function is as follows. Forms part of the ribosomal stalk, playing a central role in the interaction of the ribosome with GTP-bound translation factors. The chain is Large ribosomal subunit protein uL10 from Chlamydia felis (strain Fe/C-56) (Chlamydophila felis).